The primary structure comprises 187 residues: GTP cyclohydrolase 1 (187 aa).

Residues Cys-74, His-77, and Cys-145 each contribute to the Zn(2+) site.

It belongs to the GTP cyclohydrolase I family. In terms of assembly, homomer.

The enzyme catalyses GTP + H2O = 7,8-dihydroneopterin 3'-triphosphate + formate + H(+). The protein operates within cofactor biosynthesis; 7,8-dihydroneopterin triphosphate biosynthesis; 7,8-dihydroneopterin triphosphate from GTP: step 1/1. The polypeptide is GTP cyclohydrolase 1 (Sulfurihydrogenibium sp. (strain YO3AOP1)).